Reading from the N-terminus, the 336-residue chain is 2-phospho-L-lactate transferase (336 aa).

Asp-49 serves as a coordination point for 7,8-didemethyl-8-hydroxy-5-deazariboflavin.

It belongs to the CofD family. In terms of assembly, homodimer. Mg(2+) serves as cofactor.

It catalyses the reaction (2S)-lactyl-2-diphospho-5'-guanosine + 7,8-didemethyl-8-hydroxy-5-deazariboflavin = oxidized coenzyme F420-0 + GMP + H(+). It participates in cofactor biosynthesis; coenzyme F420 biosynthesis. Functionally, catalyzes the transfer of the 2-phospholactate moiety from (2S)-lactyl-2-diphospho-5'-guanosine to 7,8-didemethyl-8-hydroxy-5-deazariboflavin (FO) with the formation of oxidized coenzyme F420-0 and GMP. This Halobacterium salinarum (strain ATCC 700922 / JCM 11081 / NRC-1) (Halobacterium halobium) protein is 2-phospho-L-lactate transferase.